Reading from the N-terminus, the 374-residue chain is Beta sliding clamp (374 aa).

Belongs to the beta sliding clamp family. In terms of assembly, forms a ring-shaped head-to-tail homodimer around DNA which binds and tethers DNA polymerases and other proteins to the DNA. The DNA replisome complex has a single clamp-loading complex (3 tau and 1 each of delta, delta', psi and chi subunits) which binds 3 Pol III cores (1 core on the leading strand and 2 on the lagging strand) each with a beta sliding clamp dimer. Additional proteins in the replisome are other copies of gamma, psi and chi, Ssb, DNA helicase and RNA primase.

The protein resides in the cytoplasm. In terms of biological role, confers DNA tethering and processivity to DNA polymerases and other proteins. Acts as a clamp, forming a ring around DNA (a reaction catalyzed by the clamp-loading complex) which diffuses in an ATP-independent manner freely and bidirectionally along dsDNA. Initially characterized for its ability to contact the catalytic subunit of DNA polymerase III (Pol III), a complex, multichain enzyme responsible for most of the replicative synthesis in bacteria; Pol III exhibits 3'-5' exonuclease proofreading activity. The beta chain is required for initiation of replication as well as for processivity of DNA replication. In Helicobacter pylori (strain J99 / ATCC 700824) (Campylobacter pylori J99), this protein is Beta sliding clamp (dnaN).